Reading from the N-terminus, the 353-residue chain is MEELHIYPSDNYTEEDLGSGDYDSMKEPCFREENAHFNRIFLPTVYSIIFLTGIVGNGLVILVMGYQKKLRSMTDKYRLHLSVADLLFVLTLPFWAVEAVANWYFGNFLCKAVHVIYTVNLYSSVLILAFISLDRYLAIVHATNSQRPRKLLAEKVVYVGVWIPALLLTIPDFIFANVREADDRYICDRFYPNDSWLVVFQFQHIMVGLILPGIVILSCYCIIISKLSHSKGYQKRKALKTTVILILAFFACWLPYYIGISIDSFILLEIIKQGCEFEKTVHKWISITEALAFFHCCLNPILYAFLGAKFKTSAQHALTSVSRGSSLKILSKGKRGGHSSVSTESESSSFHSS.

Residues 1–22 form an important for chemokine binding and signaling region; it reads MEELHIYPSDNYTEEDLGSGDY. Residues 1–39 lie on the Extracellular side of the membrane; the sequence is MEELHIYPSDNYTEEDLGSGDYDSMKEPCFREENAHFNR. At Tyr7 the chain carries Sulfotyrosine. The N-linked (GlcNAc...) asparagine glycan is linked to Asn11. Position 12 is a sulfotyrosine (Tyr12). O-linked (Xyl...) (chondroitin sulfate) serine glycosylation is present at Ser19. Residue Tyr22 is modified to Sulfotyrosine. 2 disulfides stabilise this stretch: Cys29–Cys275 and Cys110–Cys187. A helical transmembrane segment spans residues 40-64; sequence IFLPTVYSIIFLTGIVGNGLVILVM. Over 65 to 78 the chain is Cytoplasmic; it reads GYQKKLRSMTDKYR. Residues 79–100 traverse the membrane as a helical segment; sequence LHLSVADLLFVLTLPFWAVEAV. A chemokine binding region spans residues 95–98; the sequence is WAVE. The Extracellular portion of the chain corresponds to 101–111; it reads ANWYFGNFLCK. Residues 112-131 traverse the membrane as a helical segment; sequence AVHVIYTVNLYSSVLILAFI. The interval 114–118 is chemokine binding; the sequence is HVIYT. Topologically, residues 132–155 are cytoplasmic; sequence SLDRYLAIVHATNSQRPRKLLAEK. The Important for signaling signature appears at 134–136; that stretch reads DRY. Residues 136 to 148 are involved in dimerization; when bound to chemokine; that stretch reads YLAIVHATNSQRP. A helical membrane pass occupies residues 156–175; the sequence is VVYVGVWIPALLLTIPDFIF. Residues 176–196 are Extracellular-facing; it reads ANVREADDRYICDRFYPNDSW. The interval 187-191 is chemokine binding, important for signaling; sequence CDRFY. The interval 192–211 is involved in dimerization; sequence PNDSWLVVFQFQHIMVGLIL. A helical transmembrane segment spans residues 197–217; that stretch reads LVVFQFQHIMVGLILPGIVIL. At 218-242 the chain is on the cytoplasmic side; the sequence is SCYCIIISKLSHSKGYQKRKALKTT. Residues 243 to 262 form a helical membrane-spanning segment; sequence VILILAFFACWLPYYIGISI. At 263–283 the chain is on the extracellular side; that stretch reads DSFILLEIIKQGCEFEKTVHK. An involved in dimerization region spans residues 267–269; sequence LLE. Residues 284–303 form a helical membrane-spanning segment; sequence WISITEALAFFHCCLNPILY. Residues 304–353 are Cytoplasmic-facing; sequence AFLGAKFKTSAQHALTSVSRGSSLKILSKGKRGGHSSVSTESESSSFHSS. Phosphoserine is present on residues Ser320 and Ser322. Phosphoserine; by PKC and GRK6 is present on residues Ser325 and Ser326. Positions 330–353 are disordered; sequence LSKGKRGGHSSVSTESESSSFHSS. Ser331 is subject to Phosphoserine; by GRK6. Residue Lys332 forms a Glycyl lysine isopeptide (Lys-Gly) (interchain with G-Cter in ubiquitin) linkage. Positions 338 to 353 are enriched in low complexity; sequence HSSVSTESESSSFHSS. A Phosphoserine; by GRK6 modification is found at Ser340. Phosphoserine is present on residues Ser349 and Ser352.

The protein belongs to the G-protein coupled receptor 1 family. In terms of assembly, monomer. Can form homodimers. Interacts with CD164. Interacts with ARRB2; the interaction is dependent on the C-terminal phosphorylation of CXCR4 and allows activation of MAPK1 and MAPK3. Interacts with ARR3; the interaction is dependent on the C-terminal phosphorylation of CXCR4 and modulates calcium mobilization. Interacts with RNF113A; the interaction, enhanced by CXCL12, promotes CXCR4 ubiquitination and subsequent degradation. Interacts (via the cytoplasmic C-terminal) with ITCH (via the WW domains I and II); the interaction, enhanced by CXCL12, promotes CXCR4 ubiquitination and leads to its degradation. Interacts with extracellular ubiquitin. Interacts with DBN1; this interaction is enhanced by antigenic stimulation. Following LPS binding, may form a complex with GDF5, HSP90AA1 and HSPA8. In terms of processing, phosphorylated on agonist stimulation. Rapidly phosphorylated on serine and threonine residues in the C-terminal. Phosphorylation at Ser-325 and Ser-326 leads to recruitment of ITCH, ubiquitination and protein degradation. Ubiquitinated after ligand binding, leading to its degradation. Ubiquitinated by ITCH at the cell membrane on agonist stimulation. The ubiquitin-dependent mechanism, endosomal sorting complex required for transport (ESCRT), then targets CXCR4 for lysosomal degradation. This process is dependent also on prior Ser-/Thr-phosphorylation in the C-terminal of CXCR4. Also binding of ARRB1 to STAM negatively regulates CXCR4 sorting to lysosomes though modulating ubiquitination of SFR5S. Post-translationally, sulfation is required for efficient binding of CXCL12/SDF-1alpha and promotes its dimerization. In terms of processing, O- and N-glycosylated. N-glycosylation can mask coreceptor function. The O-glycosylation chondroitin sulfate attachment does not affect interaction with CXCL12/SDF-1alpha nor its coreceptor activity.

The protein resides in the cell membrane. Its subcellular location is the cell junction. It localises to the early endosome. It is found in the late endosome. The protein localises to the lysosome. Its function is as follows. Receptor for the C-X-C chemokine CXCL12/SDF-1 that transduces a signal by increasing intracellular calcium ion levels and enhancing MAPK1/MAPK3 activation. Involved in the AKT signaling cascade. Plays a role in regulation of cell migration, e.g. during wound healing. Acts as a receptor for extracellular ubiquitin; leading to enhanced intracellular calcium ions and reduced cellular cAMP levels. Binds bacterial lipopolysaccharide (LPS) et mediates LPS-induced inflammatory response, including TNF secretion by monocytes. Involved in hematopoiesis and in cardiac ventricular septum formation. Also plays an essential role in vascularization of the gastrointestinal tract, probably by regulating vascular branching and/or remodeling processes in endothelial cells. Involved in cerebellar development. In the CNS, could mediate hippocampal-neuron survival. This is C-X-C chemokine receptor type 4 (CXCR4) from Canis lupus familiaris (Dog).